Reading from the N-terminus, the 601-residue chain is MSISIRKKNFCIIAHIDHGKSTLADRFIQKAKIISDRDFKSQMLDSMEIERERGITIKSQAVTITYKSNDGDFYELNFVDTPGHVDFSYEVSRAISSCEGALLLIDASQGIQAQTVSNFYMAFEHDLEIIPVINKIDLPNANVDFIKKQIKNDLGLNDELAISISAKNGIGIDDLLEAICKYVPSPKGSIKDPLRALIFDSHYDSYRGVVVHFRIFEGQIKTGDKIRLMHTNSDYLIEEIGVFKILLERKDRLEAGDVGYFIAGIKNISDVKIGDTVTLCDCPALSPLEGFKEVKPVVFSSVYPVDANQYDDLLRAMDRLKLNDASLTFEKDSSSALGHGFKCGFLGLLHLEVIQERIEREFDLNVILTSPSVRYKIIPKKGKSYFIESPEQFPGNEAIESVLEPYIRANIIVPTEFLGNIMSVCLLKRGVQTNLIYLNTKRVELIYKMPLAEILFDFYDKIKSVSRGYASFDYELLDYEYTDLVRLDILVNGDRVDALSQLVFKDSARTKAVGICKKLKDEIARQQFKIAIQGAIGSNVIARETISPVRKDVTAKCYGGDITRKRKLLEKQKEGKKRMKMVGNVEIPQSVFLSVLKSNDN.

A tr-type G domain is found at 5–187 (IRKKNFCIIA…AICKYVPSPK (183 aa)). Residues 17-22 (DHGKST) and 134-137 (NKID) each bind GTP.

Belongs to the TRAFAC class translation factor GTPase superfamily. Classic translation factor GTPase family. LepA subfamily.

It localises to the cell inner membrane. The enzyme catalyses GTP + H2O = GDP + phosphate + H(+). Functionally, required for accurate and efficient protein synthesis under certain stress conditions. May act as a fidelity factor of the translation reaction, by catalyzing a one-codon backward translocation of tRNAs on improperly translocated ribosomes. Back-translocation proceeds from a post-translocation (POST) complex to a pre-translocation (PRE) complex, thus giving elongation factor G a second chance to translocate the tRNAs correctly. Binds to ribosomes in a GTP-dependent manner. The polypeptide is Elongation factor 4 (Borreliella afzelii (strain PKo) (Borrelia afzelii)).